Reading from the N-terminus, the 402-residue chain is MGSLLPLLGISVVSAIFFLVLQQPEQSSSAIILSLKKRHGSSSGSSGNQYSSSRPSAGFQGNRSTCSLFLGTWVRDNSYPLYKPADCPGVVEPEFDCQMYGRPDSDYLKYRWQPQNCNLPTFNGAQFLLKMKGKTIMFAGDSLGKNQWESLICLIVSSAPSTRTEMTRGLPLSTFRFLDYGITMSFYKAPFLVDIDAVQGKRVLKLDEISGNANAWHDADLLIFNTGHWWSHTGSMQGWDLIQSGNSYYQDMDRFVAMEKALRTWAYWVETHVDRSRTQVLFLSISPTHDNPSDWAASSSSGSKNCYGETEPITGTAYPVSSYTDQLRSVIVEVLHGMHNPAFLLDITLLSSLRKDGHPSVYSGLISGSQRSRPDQSADCSHWCLPGLPDTWNQLLYTLLIY.

Residues Leu-7–Gln-23 traverse the membrane as a helical; Signal-anchor for type II membrane protein segment. Positions Gly-40–Gln-60 are disordered. Low complexity predominate over residues Ser-41–Ser-56. The short motif at Gly-140 to Ser-142 is the GDS motif element. The DCXHWCLPGXXDXWN motif motif lies at Asp-379–Asn-393.

It belongs to the PC-esterase family. TBL subfamily. Expressed in flowers, siliques, stems and leaves.

Its subcellular location is the membrane. In terms of biological role, required for nonhost resistance (NHR) during plant-microbe interactions. Plants mutated in PMR5 are resistant to powdery mildew species. May act as a bridging protein that binds pectin and other cell wall polysaccharides. Probably involved in maintaining esterification of pectins. May be involved in the specific O-acetylation of cell wall polymers. This Arabidopsis thaliana (Mouse-ear cress) protein is Protein PMR5 (PMR5).